Here is a 199-residue protein sequence, read N- to C-terminus: Putative 3-methyladenine DNA glycosylase (199 aa).

Belongs to the DNA glycosylase MPG family.

The protein is Putative 3-methyladenine DNA glycosylase of Chlorobium phaeobacteroides (strain BS1).